A 1372-amino-acid polypeptide reads, in one-letter code: DNA-directed RNA polymerase subunit beta' (1372 aa).

Residues Cys-69, Cys-71, Cys-84, and Cys-87 each coordinate Zn(2+). Asp-460, Asp-462, and Asp-464 together coordinate Mg(2+). Zn(2+)-binding residues include Cys-808, Cys-882, Cys-889, and Cys-892.

Belongs to the RNA polymerase beta' chain family. The RNAP catalytic core consists of 2 alpha, 1 beta, 1 beta' and 1 omega subunit. When a sigma factor is associated with the core the holoenzyme is formed, which can initiate transcription. It depends on Mg(2+) as a cofactor. Zn(2+) serves as cofactor.

It carries out the reaction RNA(n) + a ribonucleoside 5'-triphosphate = RNA(n+1) + diphosphate. Functionally, DNA-dependent RNA polymerase catalyzes the transcription of DNA into RNA using the four ribonucleoside triphosphates as substrates. The chain is DNA-directed RNA polymerase subunit beta' from Rickettsia typhi (strain ATCC VR-144 / Wilmington).